We begin with the raw amino-acid sequence, 690 residues long: Protein MODIFIED TRANSPORT TO THE VACUOLE 1 (690 aa).

The VHS domain occupies 20 to 150 (VTSDEDKVAP…PESINRRIEG (131 aa)). Disordered stretches follow at residues 228–258 (DGNYGTSKNTTGGSWGHASGEASESSASVRV) and 518–551 (FSIDENNSNQKGSSSSTLPQDLFAMPSTTSHQAP). Positions 243–257 (GHASGEASESSASVR) are enriched in low complexity. Residues 520 to 536 (IDENNSNQKGSSSSTLP) are compositionally biased toward polar residues.

Binds to clathrin heavy chain. As to expression, expressed in inflorescence stems, stigmas, roots, roots meristems, embryos, and floral and leaf vasculatures, but absent from the floral abscission zone.

It localises to the golgi apparatus. The protein resides in the trans-Golgi network. It is found in the cytoplasmic vesicle. Its subcellular location is the clathrin-coated vesicle. Its function is as follows. Mediates clathrin-dependent trafficking of vacuolar cargo from the trans-Golgi network (TGN). Promotes plant growth. The polypeptide is Protein MODIFIED TRANSPORT TO THE VACUOLE 1 (Arabidopsis thaliana (Mouse-ear cress)).